An 895-amino-acid chain; its full sequence is Probable LRR receptor-like serine/threonine-protein kinase At5g48740 (895 aa).

The N-terminal stretch at 1-16 (MLFWVLLSSFCVFCFS) is a signal peptide. Over 17–544 (SPDGFLSLSC…INKKQRKQNR (528 aa)) the chain is Extracellular. Residues Asn-36, Asn-50, Asn-60, Asn-140, Asn-195, Asn-234, and Asn-318 are each glycosylated (N-linked (GlcNAc...) asparagine). 6 LRR repeats span residues 385–407 (RVTSLFLSKINLRSISPTFGDLL), 408–430 (DLKTLDLHNTSLTGAIQNVGSLK), 431–453 (DLQKLNLSFNQLESFGSELEDLV), 454–477 (NLEVLDLQNNSLQGSVPETLGKLK), 478–500 (KLRLLNLENNNLVGPLPQSLNIT), and 511–532 (CLSFSSISCNNVSSTIDTPQVT). N-linked (GlcNAc...) asparagine glycans are attached at residues Asn-416, Asn-436, Asn-462, Asn-498, and Asn-521. A helical transmembrane segment spans residues 545–565 (IAILLGVSGGALFATFLVFVF). Residues 566 to 895 (MSIFTRRQRN…SYLAASAHTD (330 aa)) are Cytoplasmic-facing. The Protein kinase domain occupies 606–888 (RNFKEVIGRG…EAYSLQLSYL (283 aa)). ATP contacts are provided by residues 612-620 (IGRGSFGAV) and Lys-634. Tyr-679 carries the phosphotyrosine modification. Asp-732 functions as the Proton acceptor in the catalytic mechanism. Ser-736 carries the post-translational modification Phosphoserine. Thr-767 and Thr-772 each carry phosphothreonine. Tyr-780 is modified (phosphotyrosine).

It belongs to the protein kinase superfamily. Ser/Thr protein kinase family.

It localises to the membrane. The catalysed reaction is L-seryl-[protein] + ATP = O-phospho-L-seryl-[protein] + ADP + H(+). The enzyme catalyses L-threonyl-[protein] + ATP = O-phospho-L-threonyl-[protein] + ADP + H(+). The polypeptide is Probable LRR receptor-like serine/threonine-protein kinase At5g48740 (Arabidopsis thaliana (Mouse-ear cress)).